Consider the following 358-residue polypeptide: Peptide chain release factor 1 (358 aa).

An N5-methylglutamine modification is found at Q233.

This sequence belongs to the prokaryotic/mitochondrial release factor family. Methylated by PrmC. Methylation increases the termination efficiency of RF1.

The protein localises to the cytoplasm. Peptide chain release factor 1 directs the termination of translation in response to the peptide chain termination codons UAG and UAA. The sequence is that of Peptide chain release factor 1 from Staphylococcus haemolyticus (strain JCSC1435).